Here is a 223-residue protein sequence, read N- to C-terminus: Glycolipid transfer protein 2 (223 aa).

Aspartate 69, asparagine 73, tryptophan 116, and histidine 155 together coordinate a ganglioside GM3 (d18:1(4E)).

Belongs to the GLTP family.

In terms of biological role, transfers glycolipids in vitro. In Arabidopsis thaliana (Mouse-ear cress), this protein is Glycolipid transfer protein 2.